A 403-amino-acid polypeptide reads, in one-letter code: Acetylornithine aminotransferase (403 aa).

Pyridoxal 5'-phosphate-binding positions include 107–108 (GA) and Phe140. Position 143 (Arg143) interacts with N(2)-acetyl-L-ornithine. 225–228 (DEVQ) provides a ligand contact to pyridoxal 5'-phosphate. Lys254 carries the post-translational modification N6-(pyridoxal phosphate)lysine. Ser282 serves as a coordination point for N(2)-acetyl-L-ornithine. Pyridoxal 5'-phosphate is bound at residue Thr283.

It belongs to the class-III pyridoxal-phosphate-dependent aminotransferase family. ArgD subfamily. In terms of assembly, homodimer. The cofactor is pyridoxal 5'-phosphate.

The protein localises to the cytoplasm. The catalysed reaction is N(2)-acetyl-L-ornithine + 2-oxoglutarate = N-acetyl-L-glutamate 5-semialdehyde + L-glutamate. It functions in the pathway amino-acid biosynthesis; L-arginine biosynthesis; N(2)-acetyl-L-ornithine from L-glutamate: step 4/4. This is Acetylornithine aminotransferase from Vibrio parahaemolyticus serotype O3:K6 (strain RIMD 2210633).